The sequence spans 158 residues: MAFMVKSMVGGQLKNLTGSLGGGEDKGDGDKSAAEAQGMSREEYEEYQKQLVEEKMERDAQFTQRKAERATLRSHFRDKYRLPKNETDESQIQLAGGDVELPRELAKMIEEDTEEEEDKASVLGQLASLPGLDLSSLKDKAQTTLGDLKQSAEKCHIM.

Positions 14 to 47 (KNLTGSLGGGEDKGDGDKSAAEAQGMSREEYEEY) are disordered. Basic and acidic residues predominate over residues 23–33 (GEDKGDGDKSA). Positions 39-74 (MSREEYEEYQKQLVEEKMERDAQFTQRKAERATLRS) form a coiled coil. Cysteine 155 bears the Cysteine methyl ester mark. A lipid anchor (S-farnesyl cysteine) is attached at cysteine 155. The propeptide at 156–158 (HIM) is removed in mature form.

Belongs to the complexin/synaphin family. Binds to the SNARE core complex containing SNAP25, VAMP2 and STX1A. In terms of processing, farnesylation mediates presynaptic targeting. As to expression, present in many brain regions, including hippocampus and cerebellum (at protein level). Expressed in the retina (at protein level). Expressed in retinal amacrine cells (at protein level). Expressed in retinal photoreceptor ribbon synapses. Expressed in the retinal inner nuclear layer, at bipolar cells (at protein level). Expressed in cone photoreceptor synaptic terminals (at protein level).

It is found in the synapse. Its subcellular location is the cell membrane. In terms of biological role, complexin that regulates SNARE protein complex-mediated synaptic vesicle fusion. Required for the maintenance of synaptic ultrastructure in the adult retina. Positively regulates synaptic transmission through synaptic vesicle availability and exocytosis of neurotransmitters at photoreceptor ribbon synapses in the retina. Suppresses tonic photoreceptor activity and baseline 'noise' by suppression of Ca(2+) vesicle tonic release and the facilitation of evoked synchronous and asynchronous Ca(2+) vesicle release. The sequence is that of Complexin-3 (Cplx3) from Mus musculus (Mouse).